Reading from the N-terminus, the 415-residue chain is MFADLDYDIEEDKLGIPTVPGKVTLQKDAQNLIGISIGGGAQYCPCLYIVQVFDNTPAALDGTVAAGDEITGVNGRSIKGKTKVEVAKMIQEVKGEVTIHYNKLQADPKQGMSLDIVLKKVKHRLVENMSSGTADALGLSRAILCNDGLVKRLEELERTAELYKGMTEHTKNLLRAFYELSQTHRAFGDVFSVIGVREPQPAASEAFVKFADAHRSIEKFGIRLLKTIKPMLTDLNTYLNKAIPDTRLTIKKYLDVKFEYLSYCLKVKEMDDEEYSCIALGEPLYRVSTGNYEYRLILRCRQEARARFSQMRKDVLEKMELLDQKHVQDIVFQLQRLVSTMSKYYNDCYAVLRDADVFPIEVDLAHTTLAYGLNQEEFTDGEEEEEEEDTAAGEPARDTRGAAGPLDKGGSWCDS.

Residues 22–105 form the PDZ domain; the sequence is KVTLQKDAQN…EVTIHYNKLQ (84 aa). Zn(2+) contacts are provided by C44 and C46. T82 is subject to Phosphothreonine. The AH domain occupies 144–357; the sequence is LCNDGLVKRL…CYAVLRDADV (214 aa). Positions 376–415 are disordered; sequence EEFTDGEEEEEEEDTAAGEPARDTRGAAGPLDKGGSWCDS. The span at 377 to 391 shows a compositional bias: acidic residues; it reads EFTDGEEEEEEEDTA. Residue C413 is the site of S-palmitoyl cysteine; by DHHC8 attachment.

In terms of assembly, monomer and homodimer. Interacts with CXADR. Interacts presynaptically with the glutamate receptors GRIA2, GRIA3, GRIK3, isoform 3 of GRIA4, isoform A of GRM4, GRM7 and GRM8; with NAPA and NAPB; and with BTG2. The interaction with NAPA and NAPB disrupts the interaction with GRIA2, conducting to the internalization of GRIA2. Interacts with PRKCA; with the amine transporters SLC6A2 and SLC6A3; with the channels ASIC1 and ASIC2; with the GTP-binding proteins ARF1 and ARF3; with the ephrin receptor tyrosine kinases EPHA7, EPHB1 and EPHB2; with ERBB2 and through its PDZ domain with the C-terminal tail of PRLHR. Interacts with UNC5A. Interacts (via AH domain) with NCS1/FREQ; in a calcium-dependent manner. Interacts with F-actin and associates with the ARP2/3 complex. Interacts (via PDZ domain) with ARF1 (activated); the interaction blocks Arp2/3 complex inhibition. Interacts with SORCS3. Post-translationally, phosphorylation at Thr-82 appears to inhibit the interaction with AMPA receptors. Palmitoylation on Cys-413 is essential for long-term synaptic depression (LTD).

It localises to the cytoplasm. Its subcellular location is the perinuclear region. It is found in the membrane. The protein resides in the postsynaptic density. The protein localises to the synapse. It localises to the synaptosome. Its subcellular location is the cytoskeleton. Probable adapter protein that bind to and organize the subcellular localization of a variety of membrane proteins containing some PDZ recognition sequence. Involved in the clustering of various receptors, possibly by acting at the receptor internalization level. Plays a role in synaptic plasticity by regulating the trafficking and internalization of AMPA receptors. May be regulated upon PRKCA activation. May regulate ASIC1/ASIC3 channel. Regulates actin polymerization by inhibiting the actin-nucleating activity of the Arp2/3 complex; the function is competitive with nucleation promoting factors and is linked to neuronal morphology regulation and AMPA receptor (AMPAR) endocytosis. Via interaction with the Arp2/3 complex involved in regulation of synaptic plasicity of excitatory synapses and required for spine shrinkage during long-term depression (LTD). Involved in regulation of astrocyte morphology, antagonistic to Arp2/3 complex activator WASL/N-WASP function. The sequence is that of PRKCA-binding protein (PICK1) from Pongo abelii (Sumatran orangutan).